Consider the following 169-residue polypeptide: Transcription antitermination protein NusB (169 aa).

Positions 1-19 (MAEMKKTIDNKPAPKGEKK) are enriched in basic and acidic residues. Positions 1-22 (MAEMKKTIDNKPAPKGEKKANR) are disordered.

The protein belongs to the NusB family.

Its function is as follows. Involved in transcription antitermination. Required for transcription of ribosomal RNA (rRNA) genes. Binds specifically to the boxA antiterminator sequence of the ribosomal RNA (rrn) operons. This chain is Transcription antitermination protein NusB, found in Rhodopseudomonas palustris (strain BisB18).